The sequence spans 389 residues: Phospho-N-acetylmuramoyl-pentapeptide-transferase (389 aa).

Transmembrane regions (helical) follow at residues 25 to 45, 73 to 93, 97 to 117, 135 to 155, 190 to 210, 222 to 242, 258 to 278, 286 to 306, 311 to 331, and 366 to 386; these read RAVMATITALGIGLVCGPWVI, TMGGVLILIGIAVATLLWGDL, FIWIVMLVTFGFGVIGWVDDY, FWQSVIGLFAAVYLAFSVSEA, ISYPLGVWGFIALTYFVIVGA, GLVIMPVVLVGASLGVFAYVM, GAGELLIFCSAMGGAGLAFLW, VFMGDVGALALGGALGTVAVI, IVLFIMGGIFVAETLSVMLQV, and QVVVRFWIITLMLCLFGLSTL.

The protein belongs to the glycosyltransferase 4 family. MraY subfamily. Requires Mg(2+) as cofactor.

The protein resides in the cell inner membrane. It catalyses the reaction UDP-N-acetyl-alpha-D-muramoyl-L-alanyl-gamma-D-glutamyl-meso-2,6-diaminopimeloyl-D-alanyl-D-alanine + di-trans,octa-cis-undecaprenyl phosphate = di-trans,octa-cis-undecaprenyl diphospho-N-acetyl-alpha-D-muramoyl-L-alanyl-D-glutamyl-meso-2,6-diaminopimeloyl-D-alanyl-D-alanine + UMP. Its pathway is cell wall biogenesis; peptidoglycan biosynthesis. In terms of biological role, catalyzes the initial step of the lipid cycle reactions in the biosynthesis of the cell wall peptidoglycan: transfers peptidoglycan precursor phospho-MurNAc-pentapeptide from UDP-MurNAc-pentapeptide onto the lipid carrier undecaprenyl phosphate, yielding undecaprenyl-pyrophosphoryl-MurNAc-pentapeptide, known as lipid I. In Burkholderia multivorans (strain ATCC 17616 / 249), this protein is Phospho-N-acetylmuramoyl-pentapeptide-transferase.